The chain runs to 491 residues: MKYRDLRDFISQLEQLGELKRITVPVDPKLEMTEICDRTLRAGGPALLFENPVGFGTPVLGNLFGTERRVALGMGRDSVAELRELGELLAFLKEPEPPKGFRDAWEKLPVFRKVLSMSPKVSSSGPCQEKVLEGDEVDLYKLPIQTCWPDDAGPLVTWPLVITRGPNKERQNLGIYRQQLIGRNKLIMRWLSHRGGALDFQEWQQQHPGEPFPVSVALGADPATILGAVTPVPDTLSEYAFAGLLRGSKTELVKCIGNDLQVPASAEFVLEGFLYPGDMADEGPFGDHTGYYNEVERFPVFTVERITHRRNPIYHSTYTGRPPDEPAVLGVAMNEIFVPILKKQFPEIVDFYLPPEGCSYRMAVVTMKKQYPGHAKRVMMGVWSFLRQFMYTKFVIVCDDDVNARDWKDVIWAMTTRMDPARDTVMIENTPIDYLDFASPVAGLGSKMGMDATNKWAGETTREWGRAIAMDPAVKTRVDEMWSSLGIDTPE.

Asn172 contributes to the Mn(2+) binding site. Prenylated FMN contacts are provided by residues 175–177, 189–191, and 194–195; these read IYR, RWL, and RG. Glu238 lines the Mn(2+) pocket. Asp287 functions as the Proton donor in the catalytic mechanism.

This sequence belongs to the UbiD family. Homohexamer. Prenylated FMN serves as cofactor. The cofactor is Mn(2+).

The protein localises to the cell membrane. The enzyme catalyses a 4-hydroxy-3-(all-trans-polyprenyl)benzoate + H(+) = a 2-(all-trans-polyprenyl)phenol + CO2. Its pathway is cofactor biosynthesis; ubiquinone biosynthesis. Its function is as follows. Catalyzes the decarboxylation of 3-octaprenyl-4-hydroxy benzoate to 2-octaprenylphenol, an intermediate step in ubiquinone biosynthesis. The protein is 3-octaprenyl-4-hydroxybenzoate carboxy-lyase of Alcanivorax borkumensis (strain ATCC 700651 / DSM 11573 / NCIMB 13689 / SK2).